The chain runs to 440 residues: UDP-glucose 6-dehydrogenase YwqF (440 aa).

NAD(+)-binding positions include 2-19, Val-11, Asp-30, Lys-35, Thr-121, and Glu-155; that span reads NITV…GVSL. Substrate is bound by residues 151 to 155, Lys-204, Asn-208, 249 to 253, and Gly-257; these read EFLRE and FLKAG. Catalysis depends on Cys-260, which acts as the Nucleophile. Position 263 (Lys-263) interacts with NAD(+). A substrate-binding site is contributed by Lys-320. Arg-327 contributes to the NAD(+) binding site.

The protein belongs to the UDP-glucose/GDP-mannose dehydrogenase family. Post-translationally, phosphorylated on tyrosine residue(s). Phosphorylated by YwqD and dephosphorylated by YwqE in vitro.

The protein localises to the cytoplasm. The enzyme catalyses UDP-alpha-D-glucose + 2 NAD(+) + H2O = UDP-alpha-D-glucuronate + 2 NADH + 3 H(+). The protein operates within nucleotide-sugar biosynthesis; UDP-alpha-D-glucuronate biosynthesis; UDP-alpha-D-glucuronate from UDP-alpha-D-glucose: step 1/1. Its activity is regulated as follows. Competitively inhibited by UDP-glucose. Activated by phosphorylation, which may increase affinity for NAD(+); inhibited by dephosphorylation. In terms of biological role, catalyzes the conversion of UDP-glucose into UDP-glucuronate, one of the precursors of teichuronic acid. The chain is UDP-glucose 6-dehydrogenase YwqF (ywqF) from Bacillus subtilis (strain 168).